The sequence spans 70 residues: Cytoinsectotoxin-2c (70 aa).

This sequence belongs to the cationic peptide 06 (cytoinsectotoxin) family. As to expression, expressed by the venom gland.

Its subcellular location is the secreted. In terms of biological role, insecticidal and antimicrobial peptide. Has insecticidal activity against larvae of flesh fly S.carnaria. Has antibacterial activity against Gram-positive bacterium B.subtilis B-501 (MIC=1.25 uM) and Gram-negative bacterium E.coli DH5alpha (MIC=2.5 uM). The chain is Cytoinsectotoxin-2c from Lachesana tarabaevi (Spider).